The following is a 122-amino-acid chain: Large ribosomal subunit protein uL14 (122 aa).

This sequence belongs to the universal ribosomal protein uL14 family. As to quaternary structure, part of the 50S ribosomal subunit. Forms a cluster with proteins L3 and L19. In the 70S ribosome, L14 and L19 interact and together make contacts with the 16S rRNA in bridges B5 and B8.

Functionally, binds to 23S rRNA. Forms part of two intersubunit bridges in the 70S ribosome. In Lysinibacillus sphaericus (strain C3-41), this protein is Large ribosomal subunit protein uL14.